The following is a 289-amino-acid chain: Signal peptidase I (289 aa).

At 1 to 43 (MKKLTSTTTTLWDNKLFINNLKNFMQTNTESNNNKTTAQEWKS) the chain is on the cytoplasmic side. Residues 44–64 (FILVVVIALMIRILIIESFVV) form a helical membrane-spanning segment. The Periplasmic portion of the chain corresponds to 65 to 289 (PTGSMKATIL…IFRNLYSIED (225 aa)). Active-site residues include serine 68 and lysine 131.

The protein belongs to the peptidase S26 family.

It is found in the cell inner membrane. The enzyme catalyses Cleavage of hydrophobic, N-terminal signal or leader sequences from secreted and periplasmic proteins.. This chain is Signal peptidase I (lepB), found in Rickettsia bellii (strain OSU 85-389).